The chain runs to 447 residues: Na(+)-translocating NADH-quinone reductase subunit A (447 aa).

Belongs to the NqrA family. As to quaternary structure, composed of six subunits; NqrA, NqrB, NqrC, NqrD, NqrE and NqrF.

It carries out the reaction a ubiquinone + n Na(+)(in) + NADH + H(+) = a ubiquinol + n Na(+)(out) + NAD(+). Functionally, NQR complex catalyzes the reduction of ubiquinone-1 to ubiquinol by two successive reactions, coupled with the transport of Na(+) ions from the cytoplasm to the periplasm. NqrA to NqrE are probably involved in the second step, the conversion of ubisemiquinone to ubiquinol. This is Na(+)-translocating NADH-quinone reductase subunit A from Haemophilus influenzae (strain PittGG).